A 695-amino-acid polypeptide reads, in one-letter code: Follicle-stimulating hormone receptor (695 aa).

The N-terminal stretch at 1 to 17 (MALFLVALLAFLSLGSG) is a signal peptide. 2 cysteine pairs are disulfide-bonded: C18-C25 and C23-C32. In terms of domain architecture, LRRNT spans 18–46 (CHHRLCHCSNGVFLCQDSKVTEMPSDLPR). Residues 18 to 366 (CHHRLCHCSN…EDIMGYDILR (349 aa)) are Extracellular-facing. 9 LRR repeats span residues 48 to 70 (AVELRFVLTKLRVIPEGAFSGFG), 71 to 93 (DLEKIEISQNDVLEVIEANVFSN), 96 to 118 (KLHEIRIEKANNLLYIDPDAFQN), 121 to 142 (NLRYLLISNTGIKHLPAVHKIQ), 143 to 167 (SLQKVLLDIQDNINIHTVERNSFMG), 171 to 192 (ESMIVWLSKNGIQEIHNCAFNG), 194 to 216 (QLDELNLSDNSNLEELPNDVFQG), 219 to 239 (GPVILDISRTRIRSLPSYGLE), and 240 to 262 (NLKKLRAKSTYHLKKLPSLEKFV). 2 N-linked (GlcNAc...) asparagine glycosylation sites follow: N191 and N199. Intrachain disulfides connect C275–C346, C276–C292, C276–C356, and C292–C338. An N-linked (GlcNAc...) asparagine glycan is attached at N293. Position 335 is a sulfotyrosine (Y335). A helical membrane pass occupies residues 367–387 (VLIWFISILAITGNILVLVIL). The Cytoplasmic segment spans residues 388 to 398 (ITSQYKLTVPR). A helical membrane pass occupies residues 399 to 421 (FLMCNLAFADLCIGIYLLLIASV). At 422–443 (DVHTKSQYHNYAIDWQTGAGCD) the chain is on the extracellular side. C442 and C517 are joined by a disulfide. The chain crosses the membrane as a helical span at residues 444–465 (AAGFFTVFASELSVYTLTAITL). Residues 466 to 485 (ERWHTITHAMQLECKVHVRH) are Cytoplasmic-facing. A helical transmembrane segment spans residues 486-508 (AASIMLVGWVFAFAVALFPIFGI). Residues 509–528 (SSYMKVSICLPMDIDSPLSQ) lie on the Extracellular side of the membrane. A helical membrane pass occupies residues 529 to 550 (LYVMSLLVLNVLAFVVICGCYT). Residues 551 to 573 (HIYLTVRNPNITSSSSDTKIAKR) lie on the Cytoplasmic side of the membrane. The helical transmembrane segment at 574-597 (MAMLIFTDFLCMAPISFFAISASL) threads the bilayer. Over 598-608 (KVPLITVSKSK) the chain is Extracellular. Residues 609–630 (ILLVLFYPINSCANPFLYAIFT) form a helical membrane-spanning segment. Over 631 to 695 (RNFRRDFFIL…LIPLRHLAKN (65 aa)) the chain is Cytoplasmic.

The protein belongs to the G-protein coupled receptor 1 family. FSH/LSH/TSH subfamily. As to quaternary structure, homotrimer. Functions as a homotrimer binding the FSH hormone heterodimer composed of CGA and FSHB. Interacts with ARRB2. Interacts with APPL2; interaction is independent of follicle stimulating hormone stimulation. Post-translationally, N-glycosylated; indirectly required for FSH-binding, possibly via a conformational change that allows high affinity binding of hormone. In terms of processing, sulfated. Isoform FSH-R3 is expressed in ovary and testis, but not in kidney (at protein level).

It localises to the cell membrane. Functionally, g protein-coupled receptor for follitropin, the follicle-stimulating hormone. The activity of isoform FSH-R1 is mediated by G proteins which activate adenylate cyclase. Isoform FSH-R2 and isoform FSH-R3 also bind FSH, but this does not result in activation of adenylate cyclase. Isoform FSH-R3 may be involved in calcium signaling. Through cAMP production activates the downstream PI3K-AKT and ERK1/ERK2 signaling pathways. This chain is Follicle-stimulating hormone receptor (FSHR), found in Ovis aries (Sheep).